A 350-amino-acid chain; its full sequence is Nuclear pore complex-interacting protein family member A1 (350 aa).

Residues 306 to 325 (KTPPECLLTPLPPSAPPSVD) are disordered.

The protein belongs to the NPIP family. As to quaternary structure, may associate with the nuclear pore complex. Widely expressed.

The protein localises to the nucleus. The protein resides in the nuclear pore complex. It localises to the nucleus membrane. This chain is Nuclear pore complex-interacting protein family member A1 (NPIPA1), found in Homo sapiens (Human).